The primary structure comprises 262 residues: Cytochrome c oxidase subunit 3 (262 aa).

The next 7 helical transmembrane spans lie at 13-33, 38-58, 82-102, 134-154, 159-179, 200-220, and 237-257; these read PWPL…VMYM, GGGL…YVWW, GMLL…WAFF, TIIL…ILAG, GIIS…FQAL, ATGF…VCLF, and AAAW…VCIY.

This sequence belongs to the cytochrome c oxidase subunit 3 family. Component of the cytochrome c oxidase (complex IV, CIV), a multisubunit enzyme composed of a catalytic core of 3 subunits and several supernumerary subunits. The complex exists as a monomer or a dimer and forms supercomplexes (SCs) in the inner mitochondrial membrane with ubiquinol-cytochrome c oxidoreductase (cytochrome b-c1 complex, complex III, CIII).

It localises to the mitochondrion inner membrane. It carries out the reaction 4 Fe(II)-[cytochrome c] + O2 + 8 H(+)(in) = 4 Fe(III)-[cytochrome c] + 2 H2O + 4 H(+)(out). Component of the cytochrome c oxidase, the last enzyme in the mitochondrial electron transport chain which drives oxidative phosphorylation. The respiratory chain contains 3 multisubunit complexes succinate dehydrogenase (complex II, CII), ubiquinol-cytochrome c oxidoreductase (cytochrome b-c1 complex, complex III, CIII) and cytochrome c oxidase (complex IV, CIV), that cooperate to transfer electrons derived from NADH and succinate to molecular oxygen, creating an electrochemical gradient over the inner membrane that drives transmembrane transport and the ATP synthase. Cytochrome c oxidase is the component of the respiratory chain that catalyzes the reduction of oxygen to water. Electrons originating from reduced cytochrome c in the intermembrane space (IMS) are transferred via the dinuclear copper A center (CU(A)) of subunit 2 and heme A of subunit 1 to the active site in subunit 1, a binuclear center (BNC) formed by heme A3 and copper B (CU(B)). The BNC reduces molecular oxygen to 2 water molecules using 4 electrons from cytochrome c in the IMS and 4 protons from the mitochondrial matrix. The sequence is that of Cytochrome c oxidase subunit 3 (COX3) from Prototheca wickerhamii.